The following is a 436-amino-acid chain: Trigger factor (436 aa).

The PPIase FKBP-type domain maps to Gly-162 to Pro-247.

The protein belongs to the FKBP-type PPIase family. Tig subfamily.

Its subcellular location is the cytoplasm. It carries out the reaction [protein]-peptidylproline (omega=180) = [protein]-peptidylproline (omega=0). Its function is as follows. Involved in protein export. Acts as a chaperone by maintaining the newly synthesized protein in an open conformation. Functions as a peptidyl-prolyl cis-trans isomerase. This is Trigger factor from Neisseria meningitidis serogroup C (strain 053442).